Reading from the N-terminus, the 293-residue chain is Large ribosomal subunit protein uL4 (293 aa).

Composition is skewed to basic and acidic residues over residues 1 to 14 (MAEE…EKTP) and 33 to 55 (KTTE…ESTK). 2 disordered regions span residues 1–72 (MAEE…IKSE) and 130–166 (QRQG…STRS).

Belongs to the universal ribosomal protein uL4 family. As to quaternary structure, part of the 50S ribosomal subunit.

Functionally, one of the primary rRNA binding proteins, this protein initially binds near the 5'-end of the 23S rRNA. It is important during the early stages of 50S assembly. It makes multiple contacts with different domains of the 23S rRNA in the assembled 50S subunit and ribosome. In terms of biological role, forms part of the polypeptide exit tunnel. This is Large ribosomal subunit protein uL4 from Mycoplasma mobile (strain ATCC 43663 / 163K / NCTC 11711) (Mesomycoplasma mobile).